The primary structure comprises 222 residues: ATP-dependent dethiobiotin synthetase BioD 2 (222 aa).

T17 provides a ligand contact to Mg(2+). K38 is an active-site residue. Substrate is bound at residue T42. Residues D55 and E112 each contribute to the Mg(2+) site. Residues D55, 112-115, 172-173, 201-203, and E208 each bind ATP; these read EGCG, NR, and PYL.

It belongs to the dethiobiotin synthetase family. Homodimer. Mg(2+) is required as a cofactor.

Its subcellular location is the cytoplasm. The enzyme catalyses (7R,8S)-7,8-diammoniononanoate + CO2 + ATP = (4R,5S)-dethiobiotin + ADP + phosphate + 3 H(+). The protein operates within cofactor biosynthesis; biotin biosynthesis; biotin from 7,8-diaminononanoate: step 1/2. Its function is as follows. Catalyzes a mechanistically unusual reaction, the ATP-dependent insertion of CO2 between the N7 and N8 nitrogen atoms of 7,8-diaminopelargonic acid (DAPA, also called 7,8-diammoniononanoate) to form a ureido ring. The sequence is that of ATP-dependent dethiobiotin synthetase BioD 2 from Yersinia pestis.